The sequence spans 210 residues: Prolactin-2 (210 aa).

The signal sequence occupies residues 1–23 (MARRSQGTKLHLAVLCLVVSCHA). Cystine bridges form between C69–C183 and C200–C210.

It belongs to the somatotropin/prolactin family.

It localises to the secreted. The polypeptide is Prolactin-2 (prl2) (Oncorhynchus tshawytscha (Chinook salmon)).